The chain runs to 588 residues: A-type ATP synthase subunit A (588 aa).

237–244 lines the ATP pocket; that stretch reads GPFGSGKT.

The protein belongs to the ATPase alpha/beta chains family. In terms of assembly, has multiple subunits with at least A(3), B(3), C, D, E, F, H, I and proteolipid K(x).

The protein localises to the cell membrane. The enzyme catalyses ATP + H2O + 4 H(+)(in) = ADP + phosphate + 5 H(+)(out). Component of the A-type ATP synthase that produces ATP from ADP in the presence of a proton gradient across the membrane. The A chain is the catalytic subunit. The polypeptide is A-type ATP synthase subunit A (Methanoregula boonei (strain DSM 21154 / JCM 14090 / 6A8)).